The primary structure comprises 348 residues: Propane 2-monooxygenase, reductase component (348 aa).

Positions 5–95 constitute a 2Fe-2S ferredoxin-type domain; the sequence is HKINFDPVDI…DCTIELLNFD (91 aa). Residues Cys-39, Cys-44, Cys-47, and Cys-79 each contribute to the [2Fe-2S] cluster site. Positions 105–206 constitute an FAD-binding FR-type domain; that stretch reads IQDVRTQVQA…TGPYGSFTLK (102 aa).

This sequence belongs to the bacterial ring-hydroxylating dioxygenase ferredoxin reductase family. The propane 2-monooxygenase multicomponent enzyme system is composed of an electron transfer component and a monooxygenase component interacting with the effector protein MimD. The electron transfer component is composed of a reductase (MimB), and the monooxygenase component is formed by a large subunit (MimA) and a small subunit (MimC). The cofactor is FAD. It depends on [2Fe-2S] cluster as a cofactor.

In terms of biological role, reductase component of the propane 2-monooxygenase multicomponent enzyme system which is involved in the degradation of propane via the O2-dependent hydroxylation of propane. Reductase catalyzes the transfer of electrons from NADH or NADPH to monooxygenase. The sequence is that of Propane 2-monooxygenase, reductase component from Mycolicibacterium smegmatis (strain ATCC 700084 / mc(2)155) (Mycobacterium smegmatis).